Reading from the N-terminus, the 193-residue chain is 3-isopropylmalate dehydratase small subunit (193 aa).

The protein belongs to the LeuD family. LeuD type 1 subfamily. As to quaternary structure, heterodimer of LeuC and LeuD.

It carries out the reaction (2R,3S)-3-isopropylmalate = (2S)-2-isopropylmalate. The protein operates within amino-acid biosynthesis; L-leucine biosynthesis; L-leucine from 3-methyl-2-oxobutanoate: step 2/4. In terms of biological role, catalyzes the isomerization between 2-isopropylmalate and 3-isopropylmalate, via the formation of 2-isopropylmaleate. The polypeptide is 3-isopropylmalate dehydratase small subunit (Bacillus anthracis (strain CDC 684 / NRRL 3495)).